The following is a 190-amino-acid chain: Glutathione peroxidase 2 (190 aa).

Selenocysteine 40 is a catalytic residue. Position 40 (selenocysteine 40) is a non-standard amino acid, selenocysteine.

Belongs to the glutathione peroxidase family. As to quaternary structure, homotetramer.

The protein resides in the cytoplasm. It localises to the cytosol. The catalysed reaction is 2 glutathione + H2O2 = glutathione disulfide + 2 H2O. The enzyme catalyses a hydroperoxy polyunsaturated fatty acid + 2 glutathione = a hydroxy polyunsaturated fatty acid + glutathione disulfide + H2O. It carries out the reaction tert-butyl hydroperoxide + 2 glutathione = tert-butanol + glutathione disulfide + H2O. It catalyses the reaction cumene hydroperoxide + 2 glutathione = 2-phenylpropan-2-ol + glutathione disulfide + H2O. The catalysed reaction is (13S)-hydroperoxy-(9Z,11E)-octadecadienoate + 2 glutathione = (13S)-hydroxy-(9Z,11E)-octadecadienoate + glutathione disulfide + H2O. The enzyme catalyses (5S)-hydroperoxy-(6E,8Z,11Z,14Z)-eicosatetraenoate + 2 glutathione = (5S)-hydroxy-(6E,8Z,11Z,14Z)-eicosatetraenoate + glutathione disulfide + H2O. It carries out the reaction (12R)-hydroperoxy-(5Z,8Z,10E,14Z)-eicosatetraenoate + 2 glutathione = (12R)-hydroxy-(5Z,8Z,10E,14Z)-eicosatetraenoate + glutathione disulfide + H2O. It catalyses the reaction (15S)-hydroperoxy-(5Z,8Z,11Z,13E)-eicosatetraenoate + 2 glutathione = (15S)-hydroxy-(5Z,8Z,11Z,13E)-eicosatetraenoate + glutathione disulfide + H2O. Functionally, catalyzes the reduction of hydroperoxides in a glutathione-dependent manner thus regulating cellular redox homeostasis. Can reduce small soluble hydroperoxides such as H2O2, cumene hydroperoxide and tert-butyl hydroperoxide, as well as several fatty acid-derived hydroperoxides. Cannot reduce phosphatidycholine hydroperoxide. The sequence is that of Glutathione peroxidase 2 (Gpx2) from Mus musculus (Mouse).